A 1742-amino-acid polypeptide reads, in one-letter code: Meiosis regulator and mRNA stability factor 1 (1742 aa).

Serine 65 bears the Phosphoserine mark. In terms of domain architecture, NYN spans 351 to 488 (IGVFWDIENC…ALLHHANELI (138 aa)). 2 disordered regions span residues 620 to 642 (PSSAKAAPGKGSQANSGSATRNA) and 655 to 721 (SKTG…KEKE). The segment covering 631–642 (SQANSGSATRNA) has biased composition (polar residues). A compositionally biased stretch (low complexity) spans 673–689 (APPHRSSSAAAPAPKAP). Tyrosine 696 is modified (phosphotyrosine). Serine 757 is modified (phosphoserine). Positions 788-867 (VDVQISNLDY…KKILVSLATG (80 aa)) constitute an RRM domain. HTH OST-type domains are found at residues 872-946 (SLSL…SPLG) and 1000-1077 (SLKT…HNKP). Serine 1089 and serine 1091 each carry phosphoserine. 6 HTH OST-type domains span residues 1097 to 1171 (QLIQ…LTHR), 1173 to 1247 (QVKR…CIPR), 1257 to 1332 (RTKQ…TEVE), 1333 to 1408 (RFKA…INRK), 1409 to 1484 (SLRA…CVKL), and 1486 to 1560 (SLYL…LKND). Serine 1571 carries the phosphoserine modification. The interval 1678 to 1729 (IRNENLPPDPSSPGVSAAVPAPPSPSSETPESLLSKDPTESPAKKQPKNRVK) is disordered. The segment covering 1703–1712 (SSETPESLLS) has biased composition (low complexity).

Interacts with LIMK2.

The protein resides in the peroxisome. Functionally, essential regulator of oogenesis required for female meiotic progression to repress transposable elements and preventing their mobilization, which is essential for the germline integrity. Probably acts via some RNA metabolic process, equivalent to the piRNA system in males, which mediates the repression of transposable elements during meiosis by forming complexes composed of RNAs and governs the methylation and subsequent repression of transposons. Also required to protect from DNA double-strand breaks. This chain is Meiosis regulator and mRNA stability factor 1, found in Bos taurus (Bovine).